Consider the following 195-residue polypeptide: Transcriptional regulator GfcR (195 aa).

This sequence belongs to the purine/pyrimidine phosphoribosyltransferase family. GfcR subfamily.

The chain is Transcriptional regulator GfcR from Picrophilus torridus (strain ATCC 700027 / DSM 9790 / JCM 10055 / NBRC 100828 / KAW 2/3).